We begin with the raw amino-acid sequence, 179 residues long: Large ribosomal subunit protein uL10 (179 aa).

This sequence belongs to the universal ribosomal protein uL10 family. Part of the ribosomal stalk of the 50S ribosomal subunit. The N-terminus interacts with L11 and the large rRNA to form the base of the stalk. The C-terminus forms an elongated spine to which L12 dimers bind in a sequential fashion forming a multimeric L10(L12)X complex.

Forms part of the ribosomal stalk, playing a central role in the interaction of the ribosome with GTP-bound translation factors. This is Large ribosomal subunit protein uL10 from Mycolicibacterium gilvum (strain PYR-GCK) (Mycobacterium gilvum (strain PYR-GCK)).